The sequence spans 251 residues: Octanoyltransferase (251 aa).

A BPL/LPL catalytic domain is found at 49 to 230; the sequence is DEIADQILVL…DLDDAFAGRL (182 aa). Substrate-binding positions include 87–94, 160–162, and 173–175; these read RGGRITWH, ALG, and GLA. Cys-191 functions as the Acyl-thioester intermediate in the catalytic mechanism.

This sequence belongs to the LipB family.

It localises to the cytoplasm. It catalyses the reaction octanoyl-[ACP] + L-lysyl-[protein] = N(6)-octanoyl-L-lysyl-[protein] + holo-[ACP] + H(+). It participates in protein modification; protein lipoylation via endogenous pathway; protein N(6)-(lipoyl)lysine from octanoyl-[acyl-carrier-protein]: step 1/2. Its function is as follows. Catalyzes the transfer of endogenously produced octanoic acid from octanoyl-acyl-carrier-protein onto the lipoyl domains of lipoate-dependent enzymes. Lipoyl-ACP can also act as a substrate although octanoyl-ACP is likely to be the physiological substrate. The sequence is that of Octanoyltransferase from Corynebacterium efficiens (strain DSM 44549 / YS-314 / AJ 12310 / JCM 11189 / NBRC 100395).